The following is a 151-amino-acid chain: Transcriptional regulator MraZ (151 aa).

2 consecutive SpoVT-AbrB domains span residues 5 to 52 (ANAI…PLSE) and 81 to 124 (AVDL…DEDA).

The protein belongs to the MraZ family. In terms of assembly, forms oligomers.

The protein localises to the cytoplasm. The protein resides in the nucleoid. The chain is Transcriptional regulator MraZ from Pseudomonas savastanoi pv. phaseolicola (strain 1448A / Race 6) (Pseudomonas syringae pv. phaseolicola (strain 1448A / Race 6)).